A 231-amino-acid polypeptide reads, in one-letter code: uncharacterized protein (231 aa).

The N-terminal stretch at 1-19 (MKFKFLLTPLLSSVLFLSA) is a signal peptide. Cys-20 carries N-palmitoyl cysteine lipidation. Cys-20 carries the S-diacylglycerol cysteine lipid modification.

The protein belongs to the MG439/MG440 family.

Its subcellular location is the cell membrane. This is an uncharacterized protein from Mycoplasma pneumoniae (strain ATCC 29342 / M129 / Subtype 1) (Mycoplasmoides pneumoniae).